We begin with the raw amino-acid sequence, 459 residues long: Sulfide:quinone oxidoreductase, mitochondrial (459 aa).

The transit peptide at 1 to 24 (MLTLNSTIKSVTGSFQSASMLARF) directs the protein to the mitochondrion. 35–39 (GGGSA) contributes to the FAD binding site. Active-site cysteine persulfide intermediate residues include Cys-204 and Cys-383.

This sequence belongs to the SQRD family. Requires FAD as cofactor.

The protein localises to the mitochondrion. Functionally, catalyzes the oxidation of hydrogen sulfide, with the help of a quinone. In Schizosaccharomyces pombe (strain 972 / ATCC 24843) (Fission yeast), this protein is Sulfide:quinone oxidoreductase, mitochondrial (hmt2).